An 857-amino-acid polypeptide reads, in one-letter code: DNA gyrase subunit A (857 aa).

The Topo IIA-type catalytic domain occupies 39 to 507 (LPDVRDGLKP…YEGDMSIEDL (469 aa)). Tyrosine 127 (O-(5'-phospho-DNA)-tyrosine intermediate) is an active-site residue. Residues 534 to 540 (QKRGGKG) carry the GyrA-box motif. The interval 825 to 857 (REAEEVDGDVAVDETAEGAATTGTDEGEAPSAE) is disordered. Residues 828–840 (EEVDGDVAVDETA) show a composition bias toward acidic residues.

The protein belongs to the type II topoisomerase GyrA/ParC subunit family. As to quaternary structure, heterotetramer, composed of two GyrA and two GyrB chains. In the heterotetramer, GyrA contains the active site tyrosine that forms a transient covalent intermediate with DNA, while GyrB binds cofactors and catalyzes ATP hydrolysis.

The protein localises to the cytoplasm. It carries out the reaction ATP-dependent breakage, passage and rejoining of double-stranded DNA.. Its function is as follows. A type II topoisomerase that negatively supercoils closed circular double-stranded (ds) DNA in an ATP-dependent manner to modulate DNA topology and maintain chromosomes in an underwound state. Negative supercoiling favors strand separation, and DNA replication, transcription, recombination and repair, all of which involve strand separation. Also able to catalyze the interconversion of other topological isomers of dsDNA rings, including catenanes and knotted rings. Type II topoisomerases break and join 2 DNA strands simultaneously in an ATP-dependent manner. The protein is DNA gyrase subunit A of Streptomyces coelicolor (strain ATCC BAA-471 / A3(2) / M145).